A 282-amino-acid chain; its full sequence is Transformer-2 protein homolog alpha (282 aa).

Positions 1–118 are disordered; that stretch reads MSDVEENNFE…TGSRANPDPN (118 aa). S2 carries the N-acetylserine modification. Phosphoserine occurs at positions 2 and 14. A Phosphothreonine modification is found at T24. Over residues 51–84 the composition is skewed to basic residues; sequence RSRSKSRSRSRRHSHRRYTRSRSHSHSHRRRSRS. Residues S82, S84, and S86 each carry the phosphoserine modification. T88 carries the phosphothreonine modification. The span at 92–110 shows a compositional bias: basic residues; sequence RRRRSRSHSPMSNRRRHTG. A phosphoserine mark is found at S96 and S98. The 79-residue stretch at 119–197 folds into the RRM domain; that stretch reads TCLGVFGLSL…RRIRVDYSIT (79 aa). K198 participates in a covalent cross-link: Glycyl lysine isopeptide (Lys-Gly) (interchain with G-Cter in SUMO2). Residues 198 to 225 form a linker region; it reads KRAHTPTPGIYMGRPTHSGGGGGGGGGG. Disordered stretches follow at residues 201–245 and 260–282; these read HTPT…YDRG and SPSPYYSRYRSRSRSRSYSPRRY. Phosphothreonine occurs at positions 202 and 204. A compositionally biased stretch (gly residues) spans 215–230; it reads SGGGGGGGGGGGGGGG. Residue R232 is modified to Omega-N-methylarginine. Residues 232–245 show a composition bias toward basic and acidic residues; it reads RRRDSYYDRGYDRG. At S236 the chain carries Phosphoserine. A compositionally biased stretch (basic residues) spans 268-282; the sequence is YRSRSRSRSYSPRRY.

This sequence belongs to the splicing factor SR family. In terms of assembly, binds to A3 enhancer proteins SRp75, SRp55, SRp40 and SRp30. Interacts with ILDR1 (via C-terminus) and ILDR2. Post-translationally, phosphorylated in the RS domains.

It is found in the nucleus. Functionally, sequence-specific RNA-binding protein which participates in the control of pre-mRNA splicing. In Homo sapiens (Human), this protein is Transformer-2 protein homolog alpha.